Reading from the N-terminus, the 191-residue chain is Protein Ves (191 aa).

It belongs to the Ves family.

This Escherichia coli (strain 55989 / EAEC) protein is Protein Ves.